The chain runs to 805 residues: Phenylalanine--tRNA ligase beta subunit (805 aa).

The tRNA-binding domain occupies 39–148 (APPFTGVVVT…AALRPGTDIR (110 aa)). A B5 domain is found at 399–474 (PVREPVRMRL…RVYGFERIPD (76 aa)). Aspartate 452, aspartate 458, glutamate 461, and glutamate 462 together coordinate Mg(2+). Positions 703–804 (SRQPVVVRDL…LVAAHNARQR (102 aa)) constitute an FDX-ACB domain.

Belongs to the phenylalanyl-tRNA synthetase beta subunit family. Type 1 subfamily. In terms of assembly, tetramer of two alpha and two beta subunits. The cofactor is Mg(2+).

Its subcellular location is the cytoplasm. It carries out the reaction tRNA(Phe) + L-phenylalanine + ATP = L-phenylalanyl-tRNA(Phe) + AMP + diphosphate + H(+). This chain is Phenylalanine--tRNA ligase beta subunit, found in Bordetella pertussis (strain Tohama I / ATCC BAA-589 / NCTC 13251).